The following is a 251-amino-acid chain: Triosephosphate isomerase (251 aa).

Residues Asn10 and Lys12 each coordinate substrate. The active-site Electrophile is the His96. Glu168 (proton acceptor) is an active-site residue.

This sequence belongs to the triosephosphate isomerase family. In terms of assembly, homodimer.

It catalyses the reaction D-glyceraldehyde 3-phosphate = dihydroxyacetone phosphate. It functions in the pathway carbohydrate biosynthesis; gluconeogenesis. Its pathway is carbohydrate degradation; glycolysis; D-glyceraldehyde 3-phosphate from glycerone phosphate: step 1/1. In Aspergillus oryzae (strain ATCC 42149 / RIB 40) (Yellow koji mold), this protein is Triosephosphate isomerase (tpiA).